Consider the following 179-residue polypeptide: Large ribosomal subunit protein uL6 (179 aa).

Belongs to the universal ribosomal protein uL6 family. In terms of assembly, part of the 50S ribosomal subunit.

In terms of biological role, this protein binds to the 23S rRNA, and is important in its secondary structure. It is located near the subunit interface in the base of the L7/L12 stalk, and near the tRNA binding site of the peptidyltransferase center. This is Large ribosomal subunit protein uL6 from Kineococcus radiotolerans (strain ATCC BAA-149 / DSM 14245 / SRS30216).